We begin with the raw amino-acid sequence, 500 residues long: Serine carboxypeptidase 3 (500 aa).

The N-terminal stretch at 1-21 (MATARVSLILLVVVLAASACA) is a signal peptide. Positions 22–73 (EGLRLPRDAKFPAAQAERLIRSLNLLPKEAGPTGAGDVPSVAPGELLERRVT) are excised as a propeptide. Intrachain disulfides connect Cys126/Cys366, Cys294/Cys309, and Cys332/Cys337. An N-linked (GlcNAc...) asparagine glycan is attached at Asn144. Ser216 is an active-site residue. Asp404 is a catalytic residue. Cys407 provides a ligand contact to substrate. His461 is a catalytic residue. The propeptide occupies 485–500 (EEWLAELPEQPMYAAM).

Belongs to the peptidase S10 family. In terms of assembly, monomer.

The enzyme catalyses Release of a C-terminal amino acid with broad specificity.. This is Serine carboxypeptidase 3 (CBP3) from Oryza sativa subsp. japonica (Rice).